A 229-amino-acid chain; its full sequence is Large ribosomal subunit protein uL1 (229 aa).

The protein belongs to the universal ribosomal protein uL1 family. Part of the 50S ribosomal subunit.

In terms of biological role, binds directly to 23S rRNA. The L1 stalk is quite mobile in the ribosome, and is involved in E site tRNA release. Functionally, protein L1 is also a translational repressor protein, it controls the translation of the L11 operon by binding to its mRNA. The protein is Large ribosomal subunit protein uL1 of Streptococcus uberis (strain ATCC BAA-854 / 0140J).